Consider the following 64-residue polypeptide: Large ribosomal subunit protein bL35 (64 aa).

Positions 1 to 26 (MPKIKTHRGAAKRFKKTGTGKIKRSK) are enriched in basic residues. The interval 1–48 (MPKIKTHRGAAKRFKKTGTGKIKRSKAYASHLLGGKSPKRKRNLRKAG) is disordered.

The protein belongs to the bacterial ribosomal protein bL35 family.

The polypeptide is Large ribosomal subunit protein bL35 (Syntrophomonas wolfei subsp. wolfei (strain DSM 2245B / Goettingen)).